A 143-amino-acid chain; its full sequence is Small ribosomal subunit protein eS12 (143 aa).

It belongs to the eukaryotic ribosomal protein eS12 family.

This chain is Small ribosomal subunit protein eS12 (RPS12), found in Hordeum vulgare (Barley).